A 296-amino-acid polypeptide reads, in one-letter code: Phosphoribosylaminoimidazole-succinocarboxamide synthase (296 aa).

It belongs to the SAICAR synthetase family.

The enzyme catalyses 5-amino-1-(5-phospho-D-ribosyl)imidazole-4-carboxylate + L-aspartate + ATP = (2S)-2-[5-amino-1-(5-phospho-beta-D-ribosyl)imidazole-4-carboxamido]succinate + ADP + phosphate + 2 H(+). It participates in purine metabolism; IMP biosynthesis via de novo pathway; 5-amino-1-(5-phospho-D-ribosyl)imidazole-4-carboxamide from 5-amino-1-(5-phospho-D-ribosyl)imidazole-4-carboxylate: step 1/2. The protein is Phosphoribosylaminoimidazole-succinocarboxamide synthase of Pelobacter propionicus (strain DSM 2379 / NBRC 103807 / OttBd1).